A 490-amino-acid polypeptide reads, in one-letter code: 5'-3' exonuclease PLD3 (490 aa).

The Cytoplasmic portion of the chain corresponds to 1–38 (MKPKLMYQELKVPAEEPASELPMNEIEAWKAAEKKARW). The chain crosses the membrane as a helical; Signal-anchor for type II membrane protein span at residues 39–59 (VLLVLILAVVGFGALMTQLFL). The Lumenal portion of the chain corresponds to 60–490 (WEYGDLHLFG…DSVGNACRLL (431 aa)). Cystine bridges form between C77/C239 and C81/C237. 2 N-linked (GlcNAc...) asparagine glycosylation sites follow: N97 and N132. In terms of domain architecture, PLD phosphodiesterase 1 spans 196–223 (THGVLHTKFWVVDQTHFYLGSANMDWRS). Active-site residues include H201, K203, and D208. H201 (proton donor) is an active-site residue. Phosphate-binding residues include H201 and K203. Residue N218 coordinates phosphate. Residues N236, N284, and N387 are each glycosylated (N-linked (GlcNAc...) asparagine). Cysteines 366 and 487 form a disulfide. Residues 411–437 (YARVNHNKYMVTERATYIGTSNWSGSY) enclose the PLD phosphodiesterase 2 domain. H416 contributes to the phosphate binding site. H416 (nucleophile) is an active-site residue. Mg(2+) is bound at residue F438.

It belongs to the phospholipase D family. In terms of assembly, homodimer. Interacts with APP. In terms of processing, N-glycosylated. Post-translationally, proteolytically processed to a soluble form that is stable within endosomes and lysosomes. During transport through the secretory pathway becomes proteolysed by cysteine proteases, thereby releasing a stable soluble lysosomal lumenal polypeptide, whereas the transmembrane-bound fragment is rapidly degraded. Its transport route to lysosomes involves ubiquitination and the ESCRT complex. Ubiquitinated. Ubiquitination mediates sorting into lysosomes.

It localises to the endoplasmic reticulum membrane. It is found in the lysosome lumen. The protein resides in the early endosome membrane. Its subcellular location is the late endosome membrane. The protein localises to the golgi apparatus membrane. It localises to the endosome membrane. It catalyses the reaction Exonucleolytic cleavage in the 5'- to 3'-direction to yield nucleoside 3'-phosphates.. The enzyme catalyses a 5'-end 5'-dephospho-ribonucleotidyl-ribonucleotide-RNA + H2O = a ribonucleoside 3'-phosphate + a 5'-end dephospho-ribonucleoside-RNA + H(+). It carries out the reaction a ribonucleoside 3'-phosphate-2'-3'-cyclophospho-GMP + H2O = a ribonucleoside 3'-phosphate + 2',3'-cyclophospho-GMP + H(+). The catalysed reaction is a 5'-end 5'-dephospho-2'-deoxyribonucleotidyl-2'-deoxyribonucleotide in single-stranded DNA + H2O = a 5'-end dephospho-2'-deoxyribonucleoside in single-stranded DNA + a 2'-deoxyribonucleoside 3'-phosphate + H(+). It catalyses the reaction a 5'-end 5'-phospho-2'-deoxyribonucleotide in single-stranded DNA + H2O = a 5'-end 5'-dephospho-2'-deoxyribonucleotide in single-stranded DNA + phosphate. The enzyme catalyses a 3-lyso-sn-glycero-1-phospho-(3'-acyl-1'-sn-glycerol) + a 1-acyl-sn-glycerol = a 3-acyl-sn-glycero-1-phospho-(3'-acyl-1'-sn-glycerol) + glycerol. It carries out the reaction 3-lyso-sn-glycero-1-phospho-(3'-(9Z-octadecenoyl)-1'-sn-glycerol) + 1-(9Z-octadecenoyl)-sn-glycerol = 3-(9Z-octadecenoyl)-sn-glycero-1-phospho-(3'-(9Z-octadecenoyl)-1'-sn-glycerol) + glycerol. 5'-&gt;3' exonuclease that hydrolyzes the phosphodiester bond of single-stranded DNA (ssDNA) and RNA molecules to form nucleoside 3'-monophosphates and 5'-end 5'-hydroxy deoxyribonucleotide/ribonucleotide fragments. Partially redundant with PLD4, can cleave all four nucleotides displaying higher efficiency for ssDNA and RNA fragments initiated with uridine and guanosine residues and lower efficiency for cytidine-initiated substrates. As a result, it does not always degrade polynucleotides to the single nucleotide level, it can stall at specific sites sparing certain fragments from exonucleolytic degradation. Processes self and pathogenic ssDNA and RNA molecules that reach the endolysosomal compartment via phagocytosis or autophagy and may serve as 'danger' signals for recognition by innate immune receptors such as toll-like receptors (TLRs). Degrades mitochondrial CpG-rich ssDNA fragments to prevent TLR9 activation and autoinflammatory response, but it can cleave viral RNA to generate ligands for TLR7 activation and initiate antiviral immune responses. In plasmacytoid dendritic cells, it cooperates with endonuclease RNASET2 to release 2',3'-cyclic guanosine monophosphate (2',3'-cGMP), a potent stimulatory ligand for TLR7. Produces 2',3'-cGMPs and cytidine-rich RNA fragments that occupy TLR7 ligand-binding pockets and trigger a signaling-competent state. Can exert polynucleotide phosphatase activity toward 5'-phosphorylated ssDNA substrates although at a slow rate. Transphosphatidylase that catalyzes the exchange with R to S stereo-inversion of the glycerol moiety between (S,R)-lysophosphatidylglycerol (LPG) and monoacylglycerol (MAG) substrates to yield (S,S)-bis(monoacylglycero)phosphate (BMP). Can synthesize a variety of (S,S)-BMPs representing the main phospholipid constituent of lysosomal intralumenal vesicle (ILV) membranes that bind acid hydrolases for lipid degradation. Regulates the homeostasis and interorganellar communication of the endolysosomal system with an overall impact on cellular removal of dysfunctional organelles via autophagy as well as proper protein and lipid turnover. May play a role in myotube formation in response to ER stress. In Bos taurus (Bovine), this protein is 5'-3' exonuclease PLD3 (PLD3).